A 140-amino-acid chain; its full sequence is MAQPGKPQSVLELSRLLNIPLDDCVVPCNFCKRFLSYTELTDFDTKCLSLIWKDDFVFACCRYCCVATAAFEFENYFVESVIGWEIEQKENTPLSDIIVRCHHCLKLLNQIEKLDICGRSELFHKVRRGWKGLCRQCKQI.

2 zinc fingers span residues 28–64 (CNFC…CRYC) and 101–137 (CHHC…CRQC).

The protein belongs to the papillomaviridae E6 protein family. As to quaternary structure, forms homodimers. Interacts with ubiquitin-protein ligase UBE3A/E6-AP; this interaction stimulates UBE3A ubiquitin activity. Interacts with host BAK1.

It is found in the host cytoplasm. The protein resides in the host nucleus. Its function is as follows. Plays a major role in the induction and maintenance of cellular transformation. E6 associates with host UBE3A/E6-AP ubiquitin-protein ligase and modulates its activity. Protects host keratinocytes from apoptosis by mediating the degradation of host BAK1. May also inhibit host immune response. The polypeptide is Protein E6 (Human papillomavirus 24).